Reading from the N-terminus, the 523-residue chain is Membrane protein PTM1 (523 aa).

The first 26 residues, 1–26, serve as a signal peptide directing secretion; it reads MRVYQFCRPFQLFTYFLCYLLVFVKA. The Lumenal portion of the chain corresponds to 27 to 197; sequence NKEKISQKNY…LAGTEINKLP (171 aa). N132 carries N-linked (GlcNAc...) asparagine glycosylation. A helical transmembrane segment spans residues 198-218; the sequence is LYGLLAVAYVVAMALYSFAFW. The Cytoplasmic portion of the chain corresponds to 219-230; the sequence is KHKHELLPLQKY. The chain crosses the membrane as a helical span at residues 231 to 251; it reads LLAFFVFLTAETIFVWAYYDL. The Lumenal portion of the chain corresponds to 252 to 265; sequence KNEKGDTAGIKVYM. A helical membrane pass occupies residues 266 to 286; it reads VFLSILTAGKVTFSFFLLLII. At 287–304 the chain is on the cytoplasmic side; sequence ALGYGIVYPKLNKTLMRR. Residues 305–325 form a helical membrane-spanning segment; sequence CQMYGALTYAICIGFLIQSYL. At 326 to 333 the chain is on the lumenal side; it reads TDMEAPSP. The helical transmembrane segment at 334-354 threads the bilayer; it reads LILITLIPMALALIIFYYMII. Residues 355–381 are Cytoplasmic-facing; sequence RSMTKTVIYLKEQRQIVKLNMYKKLLY. A helical membrane pass occupies residues 382-402; the sequence is IIYASFLSVLAGSIVSSFIYV. Residues 403-417 are Lumenal-facing; sequence GMNTIDMIEKNWRSR. The chain crosses the membrane as a helical span at residues 418-438; sequence FFVTDFWPTLVYFIVFVTIAF. Residues 439–523 lie on the Cytoplasmic side of the membrane; that stretch reads LWRPTDTSYM…HGPVSPSPTK (85 aa). At S480 the chain carries Phosphoserine. A phosphothreonine mark is found at T483 and T498. Residues 483–523 are disordered; sequence TGERGIDEDDLNLNFTDDEEGHDNVNNHSQGHGPVSPSPTK. A compositionally biased stretch (acidic residues) spans 488 to 503; it reads IDEDDLNLNFTDDEEG.

The protein belongs to the LU7TM family.

Its subcellular location is the golgi apparatus membrane. It localises to the early endosome membrane. This chain is Membrane protein PTM1 (PTM1), found in Saccharomyces cerevisiae (strain YJM789) (Baker's yeast).